Here is a 367-residue protein sequence, read N- to C-terminus: Cobalt-precorrin-5B C(1)-methyltransferase (367 aa).

It belongs to the CbiD family.

The catalysed reaction is Co-precorrin-5B + S-adenosyl-L-methionine = Co-precorrin-6A + S-adenosyl-L-homocysteine. The protein operates within cofactor biosynthesis; adenosylcobalamin biosynthesis; cob(II)yrinate a,c-diamide from sirohydrochlorin (anaerobic route): step 6/10. In terms of biological role, catalyzes the methylation of C-1 in cobalt-precorrin-5B to form cobalt-precorrin-6A. The chain is Cobalt-precorrin-5B C(1)-methyltransferase from Thermosynechococcus vestitus (strain NIES-2133 / IAM M-273 / BP-1).